A 260-amino-acid chain; its full sequence is ATP synthase subunit a (260 aa).

Helical transmembrane passes span 30-50 (IAFT…IVFV), 96-116 (LFAF…LVGV), 125-145 (FTVT…VGFA), 151-171 (FFSL…IFPI), 187-207 (LFVA…FVIS), 213-233 (VGTF…ICAL), and 234-254 (ELLV…VYLN).

Belongs to the ATPase A chain family. F-type ATPases have 2 components, CF(1) - the catalytic core - and CF(0) - the membrane proton channel. CF(1) has five subunits: alpha(3), beta(3), gamma(1), delta(1), epsilon(1). CF(0) has three main subunits: a(1), b(2) and c(9-12). The alpha and beta chains form an alternating ring which encloses part of the gamma chain. CF(1) is attached to CF(0) by a central stalk formed by the gamma and epsilon chains, while a peripheral stalk is formed by the delta and b chains.

It is found in the cell inner membrane. Functionally, key component of the proton channel; it plays a direct role in the translocation of protons across the membrane. In Novosphingobium aromaticivorans (strain ATCC 700278 / DSM 12444 / CCUG 56034 / CIP 105152 / NBRC 16084 / F199), this protein is ATP synthase subunit a.